Consider the following 90-residue polypeptide: uncharacterized protein (90 aa).

The chain crosses the membrane as a helical span at residues 46 to 62; it reads MALLVVFLVSLFACTTI.

It localises to the membrane. This is an uncharacterized protein from Haemophilus influenzae (strain ATCC 51907 / DSM 11121 / KW20 / Rd).